The chain runs to 346 residues: MTSMYYNHDHLTASGKNMWSNFYVLVDTAVMLYEEEKQRRKIVSEEEEETQKRIFCLFPRKTRSSLVKRQQKLSGFLTSASSSLIDLNQFPSDSEIEDPLNHHQLLSSSCFIAADFETLQNPSSEPCSSLVLFDCKTAGSEKTETKDPPNPNFPCPLSLCLTENKNRKRRAVEQRKRTGGVKKAKVAPFSQTARETPEWLVNVMRDMKEAKDAKLIFEKTLFVTDVNPTQNRLSMPFNNLLRNDFLTSVESRIIDKDIKNDKKIGVGAILVDQRCKKWGVMLKRWEMKKESGKGSWNYNLICGWNDIVEANGLKEGDNISLWSFRSCGILCFAMEQRSPSLALCLC.

The interval 168–187 (KRRAVEQRKRTGGVKKAKVA) is disordered. The TF-B3 DNA-binding region spans 237–338 (FNNLLRNDFL…ILCFAMEQRS (102 aa)).

The protein localises to the nucleus. The sequence is that of B3 domain-containing protein At3g25182 from Arabidopsis thaliana (Mouse-ear cress).